Here is a 336-residue protein sequence, read N- to C-terminus: Holliday junction branch migration complex subunit RuvB (336 aa).

A large ATPase domain (RuvB-L) region spans residues 1-184; sequence MYDEERIVSG…FGIVGHMEYY (184 aa). ATP is bound by residues Leu-23, Arg-24, Gly-65, Lys-68, Thr-69, Thr-70, 131–133, Arg-174, Tyr-184, and Arg-221; that span reads EDY. Position 69 (Thr-69) interacts with Mg(2+). The small ATPAse domain (RuvB-S) stretch occupies residues 185–255; the sequence is NEVDLSQIIK…IVQFALDLLR (71 aa). The interval 258–336 is head domain (RuvB-H); that stretch reads KVGLDRTDRK…HLGIKYNKEG (79 aa). Residues Arg-313 and Arg-318 each contribute to the DNA site.

The protein belongs to the RuvB family. In terms of assembly, homohexamer. Forms an RuvA(8)-RuvB(12)-Holliday junction (HJ) complex. HJ DNA is sandwiched between 2 RuvA tetramers; dsDNA enters through RuvA and exits via RuvB. An RuvB hexamer assembles on each DNA strand where it exits the tetramer. Each RuvB hexamer is contacted by two RuvA subunits (via domain III) on 2 adjacent RuvB subunits; this complex drives branch migration. In the full resolvosome a probable DNA-RuvA(4)-RuvB(12)-RuvC(2) complex forms which resolves the HJ.

It localises to the cytoplasm. It catalyses the reaction ATP + H2O = ADP + phosphate + H(+). Functionally, the RuvA-RuvB-RuvC complex processes Holliday junction (HJ) DNA during genetic recombination and DNA repair, while the RuvA-RuvB complex plays an important role in the rescue of blocked DNA replication forks via replication fork reversal (RFR). RuvA specifically binds to HJ cruciform DNA, conferring on it an open structure. The RuvB hexamer acts as an ATP-dependent pump, pulling dsDNA into and through the RuvAB complex. RuvB forms 2 homohexamers on either side of HJ DNA bound by 1 or 2 RuvA tetramers; 4 subunits per hexamer contact DNA at a time. Coordinated motions by a converter formed by DNA-disengaged RuvB subunits stimulates ATP hydrolysis and nucleotide exchange. Immobilization of the converter enables RuvB to convert the ATP-contained energy into a lever motion, pulling 2 nucleotides of DNA out of the RuvA tetramer per ATP hydrolyzed, thus driving DNA branch migration. The RuvB motors rotate together with the DNA substrate, which together with the progressing nucleotide cycle form the mechanistic basis for DNA recombination by continuous HJ branch migration. Branch migration allows RuvC to scan DNA until it finds its consensus sequence, where it cleaves and resolves cruciform DNA. This chain is Holliday junction branch migration complex subunit RuvB, found in Ligilactobacillus salivarius (strain UCC118) (Lactobacillus salivarius).